Reading from the N-terminus, the 522-residue chain is 2-isopropylmalate synthase (522 aa).

The Pyruvate carboxyltransferase domain maps to 5–267 (VIIFDTTLRD…YTNINAREIH (263 aa)). Mn(2+) is bound by residues Asp14, His202, His204, and Asn238. Residues 392–522 (VMEQLVVQSD…MQQTRELGGV (131 aa)) form a regulatory domain region.

This sequence belongs to the alpha-IPM synthase/homocitrate synthase family. LeuA type 1 subfamily. As to quaternary structure, homodimer. It depends on Mn(2+) as a cofactor.

It is found in the cytoplasm. The catalysed reaction is 3-methyl-2-oxobutanoate + acetyl-CoA + H2O = (2S)-2-isopropylmalate + CoA + H(+). The protein operates within amino-acid biosynthesis; L-leucine biosynthesis; L-leucine from 3-methyl-2-oxobutanoate: step 1/4. Functionally, catalyzes the condensation of the acetyl group of acetyl-CoA with 3-methyl-2-oxobutanoate (2-ketoisovalerate) to form 3-carboxy-3-hydroxy-4-methylpentanoate (2-isopropylmalate). This Shewanella amazonensis (strain ATCC BAA-1098 / SB2B) protein is 2-isopropylmalate synthase.